The sequence spans 75 residues: Ribonuclease pancreatic (75 aa).

Intrachain disulfides connect C7–C65 and C46–C53. Residue N15 is glycosylated (N-linked (GlcNAc...) asparagine). Substrate-binding positions include 22–26 (KPVNT), K47, and R66.

This sequence belongs to the pancreatic ribonuclease family. In terms of assembly, monomer. Interacts with and forms tight 1:1 complexes with RNH1. Dimerization of two such complexes may occur. Interaction with RNH1 inhibits this protein. As to expression, pancreas.

Its subcellular location is the secreted. The catalysed reaction is an [RNA] containing cytidine + H2O = an [RNA]-3'-cytidine-3'-phosphate + a 5'-hydroxy-ribonucleotide-3'-[RNA].. It carries out the reaction an [RNA] containing uridine + H2O = an [RNA]-3'-uridine-3'-phosphate + a 5'-hydroxy-ribonucleotide-3'-[RNA].. Endonuclease that catalyzes the cleavage of RNA on the 3' side of pyrimidine nucleotides. Acts on single-stranded and double-stranded RNA. The protein is Ribonuclease pancreatic (rnase1) of Oryx leucoryx (Arabian oryx).